Consider the following 302-residue polypeptide: Glutaminase (302 aa).

Substrate-binding residues include serine 61, asparagine 111, glutamate 155, asparagine 162, tyrosine 186, tyrosine 238, and valine 256.

Belongs to the glutaminase family. Homotetramer.

It carries out the reaction L-glutamine + H2O = L-glutamate + NH4(+). The chain is Glutaminase from Pseudomonas paraeruginosa (strain DSM 24068 / PA7) (Pseudomonas aeruginosa (strain PA7)).